Here is a 749-residue protein sequence, read N- to C-terminus: Ribosome-releasing factor 2, mitochondrial (749 aa).

The transit peptide at 1-22 (MLLLLCNRSVVPRGIRRILRTA) directs the protein to the mitochondrion. The tr-type G domain occupies 44–322 (KNIRNIGILA…AVLKYLPAPN (279 aa)). GTP-binding positions include 53-60 (AHIDGGKT), 117-121 (DTPGH), and 171-174 (NKMD).

It belongs to the TRAFAC class translation factor GTPase superfamily. Classic translation factor GTPase family. EF-G/EF-2 subfamily.

The protein localises to the mitochondrion. In terms of biological role, mitochondrial GTPase that mediates the disassembly of ribosomes from messenger RNA at the termination of mitochondrial protein biosynthesis. Not involved in the GTP-dependent ribosomal translocation step during translation elongation. This Culex quinquefasciatus (Southern house mosquito) protein is Ribosome-releasing factor 2, mitochondrial.